A 396-amino-acid chain; its full sequence is Peptide chain release factor 1, mitochondrial (396 aa).

At glutamine 268 the chain carries N5-methylglutamine. Positions 317–340 (LEKEEKERNARKDQVSTTDRSDKI) are disordered.

This sequence belongs to the prokaryotic/mitochondrial release factor family. In terms of processing, methylation of glutamine in the GGQ triplet is conserved from bacteria to mammals.

The protein localises to the mitochondrion. Functionally, mitochondrial peptide chain release factor that directs the termination of translation in response to the peptide chain termination codons UAA and UAG. The sequence is that of Peptide chain release factor 1, mitochondrial (MRF1) from Kluyveromyces lactis (strain ATCC 8585 / CBS 2359 / DSM 70799 / NBRC 1267 / NRRL Y-1140 / WM37) (Yeast).